The primary structure comprises 288 residues: ATP phosphoribosyltransferase (288 aa).

The protein belongs to the ATP phosphoribosyltransferase family. Long subfamily. Requires Mg(2+) as cofactor.

It is found in the cytoplasm. The catalysed reaction is 1-(5-phospho-beta-D-ribosyl)-ATP + diphosphate = 5-phospho-alpha-D-ribose 1-diphosphate + ATP. It functions in the pathway amino-acid biosynthesis; L-histidine biosynthesis; L-histidine from 5-phospho-alpha-D-ribose 1-diphosphate: step 1/9. With respect to regulation, feedback inhibited by histidine. Its function is as follows. Catalyzes the condensation of ATP and 5-phosphoribose 1-diphosphate to form N'-(5'-phosphoribosyl)-ATP (PR-ATP). Has a crucial role in the pathway because the rate of histidine biosynthesis seems to be controlled primarily by regulation of HisG enzymatic activity. The chain is ATP phosphoribosyltransferase from Methanococcus maripaludis (strain C6 / ATCC BAA-1332).